A 1114-amino-acid chain; its full sequence is Translation initiation factor IF-2 (1114 aa).

Disordered stretches follow at residues 69–102 and 181–507; these read SIKK…PLLI and INNN…KRRA. Residues 85-96 show a composition bias toward basic and acidic residues; sequence SKKETPLKDNSN. Residues 181–198 are compositionally biased toward polar residues; it reads INNNVKSNESSQNISSAG. Low complexity predominate over residues 240–251; the sequence is INPNKQNNKQNI. Polar residues predominate over residues 252–261; sequence AFKQTGSNRI. Low complexity-rich tracts occupy residues 262–278, 290–309, and 321–337; these read GSPN…GLRN, NRQG…GLRN, and NRQG…NRPG. Positions 365–375 are enriched in basic and acidic residues; it reads NSEKDNKDKNN. Residues 376 to 385 are compositionally biased toward low complexity; the sequence is NAKQNINGPN. The span at 417-431 shows a compositional bias: basic and acidic residues; it reads GKTDWDDSAKLEALR. Basic residues predominate over residues 489 to 505; sequence KQFKKKKKETTRQRQKR. A tr-type G domain is found at 606–778; sequence RRPPVITVMG…ILLVSEVEDL (173 aa). The segment at 615 to 622 is G1; sequence GHVDHGKT. Residue 615–622 coordinates GTP; it reads GHVDHGKT. The segment at 640-644 is G2; sequence GITQH. The G3 stretch occupies residues 665-668; it reads DTPG. Residues 665 to 669 and 719 to 722 contribute to the GTP site; these read DTPGH and NKID. The tract at residues 719-722 is G4; sequence NKID. Residues 755–757 are G5; sequence SAI.

This sequence belongs to the TRAFAC class translation factor GTPase superfamily. Classic translation factor GTPase family. IF-2 subfamily.

The protein resides in the cytoplasm. Its function is as follows. One of the essential components for the initiation of protein synthesis. Protects formylmethionyl-tRNA from spontaneous hydrolysis and promotes its binding to the 30S ribosomal subunits. Also involved in the hydrolysis of GTP during the formation of the 70S ribosomal complex. This is Translation initiation factor IF-2 from Prochlorococcus marinus (strain MIT 9301).